We begin with the raw amino-acid sequence, 300 residues long: MEISQLLPKFKIEKIIKEWLEEDIPSFDYGGCVVGSDEKVAHLLGKQNGVFSGSIFFQEIFNQLGCKVIWFIKDGESFSMTHGPEKNKPQVLAHVIGPVRNILIGERLSLNILSRSCGITTQGYNVKKLVDGDNEQQQQQPWKGKIAGTRKTTPGFRLVEKLALLTAGLDTHRMDLSSMIMLKDNHIWACGNITNTVKNARSVGGFSLKIEVECRNQNEAIEAIEAGADIVMLDNFNPQDLQTVSTYLKQHYPHITLEASGGITSATIIQYAIPTIDIISMGNLTQGVPHIDISLKIQKQ.

The segment at 5–9 (QLLPK) is important for hexamer formation. Residues Arg107, 150–151 (RK), 172–173 (HR), Lys183, Glu213, Asp234, 260–262 (SGG), and Gly282 each bind quinolinate.

Belongs to the NadC/ModD family. As to quaternary structure, hexamer formed by 3 homodimers.

The catalysed reaction is nicotinate beta-D-ribonucleotide + CO2 + diphosphate = quinolinate + 5-phospho-alpha-D-ribose 1-diphosphate + 2 H(+). Its pathway is cofactor biosynthesis; NAD(+) biosynthesis; nicotinate D-ribonucleotide from quinolinate: step 1/1. In terms of biological role, involved in the catabolism of quinolinic acid (QA). In Dictyostelium discoideum (Social amoeba), this protein is Nicotinate-nucleotide pyrophosphorylase [carboxylating] (qprt).